A 105-amino-acid polypeptide reads, in one-letter code: Vacuolar ATPase assembly integral membrane protein VMA21 homolog (105 aa).

The segment at 1 to 26 is disordered; sequence MSTKNKKAAGGNGGAPKQTRQQSHDS. At 1–36 the chain is on the cytoplasmic side; sequence MSTKNKKAAGGNGGAPKQTRQQSHDSQDYSSFKTVL. A helical transmembrane segment spans residues 37–57; the sequence is FYCMLIVFLPVLTFFVLKGFV. The Lumenal segment spans residues 58-68; the sequence is LDQFLNISEVK. The helical transmembrane segment at 69 to 89 threads the bilayer; it reads VNIASAVGAVVALHIALGLYI. At 90–105 the chain is on the cytoplasmic side; that stretch reads YRAYFGAPGSKGSKTD.

This sequence belongs to the VMA21 family.

It is found in the endoplasmic reticulum membrane. The protein localises to the endoplasmic reticulum-Golgi intermediate compartment membrane. It localises to the cytoplasmic vesicle. The protein resides in the COPII-coated vesicle membrane. In terms of biological role, required for the assembly of the V0 complex of the vacuolar ATPase (V-ATPase) in the endoplasmic reticulum. This is Vacuolar ATPase assembly integral membrane protein VMA21 homolog from Drosophila sechellia (Fruit fly).